A 152-amino-acid chain; its full sequence is Transcriptional regulator MraZ (152 aa).

SpoVT-AbrB domains are found at residues 5-52 (ATLV…PLPE) and 81-124 (ASEC…DETT).

The protein belongs to the MraZ family. In terms of assembly, dodecamer.

It is found in the cytoplasm. Its subcellular location is the nucleoid. Negatively regulates its own expression and that of the subsequent genes in the proximal part of the division and cell wall (dcw) gene cluster. Acts by binding directly to DNA. May also regulate the expression of genes outside the dcw cluster. This Escherichia coli (strain K12) protein is Transcriptional regulator MraZ.